A 352-amino-acid chain; its full sequence is S-adenosylmethionine:tRNA ribosyltransferase-isomerase (352 aa).

The protein belongs to the QueA family. As to quaternary structure, monomer.

It localises to the cytoplasm. It carries out the reaction 7-aminomethyl-7-carbaguanosine(34) in tRNA + S-adenosyl-L-methionine = epoxyqueuosine(34) in tRNA + adenine + L-methionine + 2 H(+). It functions in the pathway tRNA modification; tRNA-queuosine biosynthesis. In terms of biological role, transfers and isomerizes the ribose moiety from AdoMet to the 7-aminomethyl group of 7-deazaguanine (preQ1-tRNA) to give epoxyqueuosine (oQ-tRNA). The chain is S-adenosylmethionine:tRNA ribosyltransferase-isomerase from Paraburkholderia xenovorans (strain LB400).